A 478-amino-acid chain; its full sequence is Monocarboxylate transporter 2 (478 aa).

At 1–15 the chain is on the cytoplasmic side; sequence MPPMPSAPPVHPPPD. A helical membrane pass occupies residues 16–36; that stretch reads GGWGWIVVGAAFISIGFSYAF. The Extracellular portion of the chain corresponds to 37 to 59; sequence PKAVTVFFKEIQQIFHTTYSEIA. A helical membrane pass occupies residues 60–80; the sequence is WISSIMLAVMYAGGPVSSVLV. Topologically, residues 81-89 are cytoplasmic; the sequence is NKYGSRPVV. Residues 90–110 traverse the membrane as a helical segment; that stretch reads IAGGLLCCLGMVLASFSSSVV. The Extracellular portion of the chain corresponds to 111-115; the sequence is QLYLT. Residues 116-136 form a helical membrane-spanning segment; that stretch reads MGFITGLGLAFNLQPALTIIG. The Cytoplasmic portion of the chain corresponds to 137 to 148; it reads KYFYRKRPMANG. The helical transmembrane segment at 149 to 169 threads the bilayer; that stretch reads LAMAGSPVFLSSLAPFNQYLF. Topologically, residues 170–173 are extracellular; that stretch reads NTFG. The helical transmembrane segment at 174–194 threads the bilayer; it reads WKGSFLILGSLLLNACVAGSL. At 195–246 the chain is on the cytoplasmic side; the sequence is MRPLGPNQTTSKSKNKTGKTEDDSSPKKIKTKKSTWEKVNKYLDFSLFKHRG. The interval 200 to 224 is disordered; the sequence is PNQTTSKSKNKTGKTEDDSSPKKIK. Residues 247-267 traverse the membrane as a helical segment; that stretch reads FLIYLSGNVIMFLGFFAPIIF. At 268-282 the chain is on the extracellular side; the sequence is LAPYAKDQGIDEYSA. Residues 283–303 form a helical membrane-spanning segment; the sequence is AFLLSVMAFVDMFARPSVGLI. Residues 304–312 lie on the Cytoplasmic side of the membrane; that stretch reads ANSKYIRPR. The helical transmembrane segment at 313–333 threads the bilayer; that stretch reads IQYFFSFAIMFNGVCHLLCPL. Topologically, residues 334–338 are extracellular; sequence AQDYT. The chain crosses the membrane as a helical span at residues 339-359; it reads SLVLYAVFFGLGFGSVSSVLF. Topologically, residues 360-373 are cytoplasmic; that stretch reads ETLMDLVGAPRFSS. The chain crosses the membrane as a helical span at residues 374–394; that stretch reads AVGLVTIVECGPVLLGPPLAG. The Extracellular portion of the chain corresponds to 395 to 406; that stretch reads KLVDLTGEYKYM. Residues 407–427 form a helical membrane-spanning segment; it reads YMSCGAIVVAASVWLLIGNAI. The Cytoplasmic portion of the chain corresponds to 428–478; sequence NYRLLAKERKEENARQKTRESEPLSKSKHSEDVNVKVSNAQSVTSERETNI. Basic and acidic residues predominate over residues 437–461; sequence KEENARQKTRESEPLSKSKHSEDVN. A disordered region spans residues 437-478; sequence KEENARQKTRESEPLSKSKHSEDVNVKVSNAQSVTSERETNI.

The protein belongs to the major facilitator superfamily. Monocarboxylate porter (TC 2.A.1.13) family. Homodimer. Interacts with GRID2IP. Interacts with EMB; interaction mediates SLC16A7 targeting to the plasma membrane. Interacts with isoform 2 of BSG. Detected in heart and in blood lymphocytes and monocytes (at protein level). High expression in testis, moderate to low in spleen, heart, kidney, pancreas, skeletal muscle, brain and leukocyte. Restricted expression in normal tissues, but widely expressed in cancer cells.

The protein resides in the cell membrane. The protein localises to the basolateral cell membrane. Its subcellular location is the cytoplasm. The enzyme catalyses pyruvate(out) + H(+)(out) = pyruvate(in) + H(+)(in). The catalysed reaction is 3-methyl-2-oxobutanoate(out) + H(+)(out) = 3-methyl-2-oxobutanoate(in) + H(+)(in). It catalyses the reaction (S)-lactate(in) + H(+)(in) = (S)-lactate(out) + H(+)(out). It carries out the reaction acetoacetate(out) + H(+)(out) = acetoacetate(in) + H(+)(in). The enzyme catalyses (R)-3-hydroxybutanoate(out) + H(+)(out) = (R)-3-hydroxybutanoate(in) + H(+)(in). The catalysed reaction is 4-methyl-2-oxopentanoate(out) + H(+)(out) = 4-methyl-2-oxopentanoate(in) + H(+)(in). It catalyses the reaction (S)-3-hydroxybutanoate(out) + H(+)(out) = (S)-3-hydroxybutanoate(in) + H(+)(in). Transport activity exhibits steep dependence on substrate concentration. Substrate concentration sensitivity of SLC16A7 arises from the strong inter-subunit cooperativity of the SLC16A7 dimer during transport. Inhibited by AR-C155858. Functionally, proton-coupled monocarboxylate symporter. Catalyzes the rapid transport across the plasma membrane of monocarboxylates such as L-lactate, pyruvate and ketone bodies, acetoacetate, beta-hydroxybutyrate and acetate. Dimerization is functionally required and both subunits work cooperatively in transporting substrate. The sequence is that of Monocarboxylate transporter 2 from Homo sapiens (Human).